The following is a 211-amino-acid chain: 3-demethoxyubiquinol 3-hydroxylase (211 aa).

Positions 60, 90, 93, 142, 174, and 177 each coordinate Fe cation.

It belongs to the COQ7 family. Fe cation is required as a cofactor.

Its subcellular location is the cell membrane. The catalysed reaction is a 5-methoxy-2-methyl-3-(all-trans-polyprenyl)benzene-1,4-diol + AH2 + O2 = a 3-demethylubiquinol + A + H2O. Its pathway is cofactor biosynthesis; ubiquinone biosynthesis. In terms of biological role, catalyzes the hydroxylation of 2-nonaprenyl-3-methyl-6-methoxy-1,4-benzoquinol during ubiquinone biosynthesis. This Herminiimonas arsenicoxydans protein is 3-demethoxyubiquinol 3-hydroxylase.